The chain runs to 470 residues: Iron-sulfur cluster assembly protein SufB (470 aa).

It belongs to the iron-sulfur cluster assembly SufBD family. In terms of assembly, component of a complex composed of SufB, SufC and SufD in a stoichiometric ratio of 1:2:1. Interacts with SufC. Interacts with SufD.

Its pathway is cofactor biosynthesis; iron-sulfur cluster biosynthesis. Functionally, participates in the sulfur mobilization (SUF) pathway for iron-sulfur (Fe-S) cluster biogenesis. As part of a complex consisting of SufB-SufC(2)-SufD, involved in assembly of [4Fe-4S] clusters. Exhibits ATPase activity. This is Iron-sulfur cluster assembly protein SufB from Plasmodium falciparum (isolate 3D7).